The chain runs to 465 residues: MFTRVANFCRKVLSREESEAEQAVARPQVTVIPREQHAISRKDISENALKVMYRLNKAGYEAWLVGGGVRDLLLGKKPKDFDVTTNATPEQVRKLFRNCRLVGRRFRLAHVMFGPEIIEVATFRGHHEGNVSDRTTSQRGQNGMLLRDNIFGSIEEDAQRRDFTINSLYYSVADFTVRDYVGGMKDLKDGVIRLIGNPETRYREDPVRMLRAVRFAAKLGMRISPETAEPIPRLATLLNDIPPARLFEESLKLLQAGYGYETYKLLCEYHLFQPLFPTITRYFTENGDSPMERIIEQVLKNTDTRIHNDMRVNPAFLFAAMFWYPLLETAQKIAQESGLTYHDAFALAMNDVLDEACRSLAIPKRLTTLTRDIWQLQLRMSRRQGKRAWKLLEHPKFRAAYDLLALRAEVERNAELQRLVKWWGEFQVSAPPDQKGMLNELDEEPSPRRRTRRPRKRAPRREGTA.

Catalysis depends on residues aspartate 80, aspartate 82, and aspartate 162. Residues 429 to 465 are disordered; the sequence is SAPPDQKGMLNELDEEPSPRRRTRRPRKRAPRREGTA. The span at 448 to 459 shows a compositional bias: basic residues; it reads RRRTRRPRKRAP.

Belongs to the tRNA nucleotidyltransferase/poly(A) polymerase family.

The catalysed reaction is RNA(n) + ATP = RNA(n)-3'-adenine ribonucleotide + diphosphate. Functionally, adds poly(A) tail to the 3' end of many RNAs, which usually targets these RNAs for decay. Plays a significant role in the global control of gene expression, through influencing the rate of transcript degradation, and in the general RNA quality control. The polypeptide is Poly(A) polymerase I (Escherichia coli O157:H7).